The chain runs to 260 residues: Ditrans,polycis-undecaprenyl-diphosphate synthase ((2E,6E)-farnesyl-diphosphate specific) (260 aa).

The active site involves Asp20. A Mg(2+)-binding site is contributed by Asp20. Residues 21-24 (GNGR), Trp25, Arg33, His37, and 65-67 (SSE) each bind substrate. Asn68 (proton acceptor) is an active-site residue. Trp69, Arg71, and Arg188 together coordinate substrate. Position 193 (His193) interacts with Mg(2+). 194-196 (RIS) is a substrate binding site. Position 207 (Glu207) interacts with Mg(2+).

It belongs to the UPP synthase family. In terms of assembly, homodimer. It depends on Mg(2+) as a cofactor.

It catalyses the reaction 8 isopentenyl diphosphate + (2E,6E)-farnesyl diphosphate = di-trans,octa-cis-undecaprenyl diphosphate + 8 diphosphate. Its function is as follows. Catalyzes the sequential condensation of isopentenyl diphosphate (IPP) with (2E,6E)-farnesyl diphosphate (E,E-FPP) to yield (2Z,6Z,10Z,14Z,18Z,22Z,26Z,30Z,34E,38E)-undecaprenyl diphosphate (di-trans,octa-cis-UPP). UPP is the precursor of glycosyl carrier lipid in the biosynthesis of bacterial cell wall polysaccharide components such as peptidoglycan and lipopolysaccharide. This Wigglesworthia glossinidia brevipalpis protein is Ditrans,polycis-undecaprenyl-diphosphate synthase ((2E,6E)-farnesyl-diphosphate specific).